Consider the following 215-residue polypeptide: Beta-crystallin A3 (215 aa).

Met1 carries the N-acetylmethionine modification. The interval Met1–Met24 is disordered. Residues Met1–Pro30 form an N-terminal arm region. The residue at position 2 (Glu2) is an N-acetylalanine. Beta/gamma crystallin 'Greek key' domains follow at residues Trp31 to Cys70 and Gly71 to Cys117. S-glutathionyl cysteine; alternate is present on residues Cys82 and Cys117. Residues Cys82 and Cys117 each carry the S-methylcysteine; alternate modification. A connecting peptide region spans residues Ser118–Glu123. Beta/gamma crystallin 'Greek key' domains follow at residues Ser124–Cys165 and Gly166–Gln214.

This sequence belongs to the beta/gamma-crystallin family. As to quaternary structure, homo/heterodimer, or complexes of higher-order. The structure of beta-crystallin oligomers seems to be stabilized through interactions between the N-terminal arms. Interacts with CRYBA1. Post-translationally, specific cleavages in the N-terminal arm occur during lens maturation and give rise to several truncated forms. In terms of processing, isoform A1 contains a N-acetylalanine at position 2.

Functionally, crystallins are the dominant structural components of the vertebrate eye lens. The chain is Beta-crystallin A3 from Bos taurus (Bovine).